The chain runs to 279 residues: Pantothenate synthetase (279 aa).

26-33 (MGGLHEGH) contacts ATP. His-33 (proton donor) is an active-site residue. Residue Gln-57 participates in (R)-pantoate binding. Gln-57 contributes to the beta-alanine binding site. Residue 143 to 146 (GKKD) participates in ATP binding. Gln-149 contributes to the (R)-pantoate binding site. Residues Val-172 and 180–183 (LSSR) each bind ATP.

Belongs to the pantothenate synthetase family. As to quaternary structure, homodimer.

The protein localises to the cytoplasm. It carries out the reaction (R)-pantoate + beta-alanine + ATP = (R)-pantothenate + AMP + diphosphate + H(+). The protein operates within cofactor biosynthesis; (R)-pantothenate biosynthesis; (R)-pantothenate from (R)-pantoate and beta-alanine: step 1/1. In terms of biological role, catalyzes the condensation of pantoate with beta-alanine in an ATP-dependent reaction via a pantoyl-adenylate intermediate. This Nitrosospira multiformis (strain ATCC 25196 / NCIMB 11849 / C 71) protein is Pantothenate synthetase.